Consider the following 121-residue polypeptide: Large ribosomal subunit protein uL18 (121 aa).

The protein belongs to the universal ribosomal protein uL18 family. As to quaternary structure, part of the 50S ribosomal subunit; part of the 5S rRNA/L5/L18/L25 subcomplex. Contacts the 5S and 23S rRNAs.

This is one of the proteins that bind and probably mediate the attachment of the 5S RNA into the large ribosomal subunit, where it forms part of the central protuberance. This chain is Large ribosomal subunit protein uL18, found in Delftia acidovorans (strain DSM 14801 / SPH-1).